The following is a 547-amino-acid chain: Zinc metalloproteinase-disintegrin-like BjussuMP-1 (547 aa).

The propeptide occupies 1–133 (EFKVNGEPVV…KKASKLVVTA (133 aa)). The Peptidase M12B domain occupies 141-337 (RYVEIVVVVD…HNPQCILNEP (197 aa)). The Ca(2+) site is built by E144 and D228. Intrachain disulfides connect C252/C332, C292/C316, and C294/C299. H277 serves as a coordination point for Zn(2+). E278 is an active-site residue. H281 and H287 together coordinate Zn(2+). C332, N335, V341, N344, L346, E348, E351, and D354 together coordinate Ca(2+). A Disintegrin domain is found at 339–421 (LTVSGNELLE…DCPRNRFHRN (83 aa)). Cystine bridges form between C353–C363, C362–C385, C376–C382, C381–C406, C394–C413, C425–C437, C444–C494, C459–C501, C472–C482, C489–C526, and C520–C531. A glycan (N-linked (GlcNAc...) asparagine) is linked at N451. An N-linked (GlcNAc...) asparagine glycan is attached at N504.

It belongs to the venom metalloproteinase (M12B) family. P-III subfamily. P-IIIa sub-subfamily. Monomer. Requires Zn(2+) as cofactor. In terms of tissue distribution, expressed by the venom gland.

It localises to the secreted. With respect to regulation, completely inhibited by EDTA, EGTA, 1,10-phenanthroline, and partially by beta-mercaptoethanol. Is not inhibited by aprotinin and leupeptin. Functionally, this protein is a zinc metalloprotease from snake venom that causes hemorrhage in mice after intradermal injection. It inhibits platelet aggregation induced by collagen and ADP. Has moderate edema activity, but no myotoxic activity. It hydrolyzes the Aalpha-chain and more slowly the Bbeta-chain of fibrinogen, without affecting the gamma-chains. It also shows proteolytic activity on casein. It is unable to clot plasma. It also shows bactericidal activity against E.coli and S.aureus. This chain is Zinc metalloproteinase-disintegrin-like BjussuMP-1, found in Bothrops jararacussu (Jararacussu).